The chain runs to 101 residues: NAD(P)H-quinone oxidoreductase subunit 4L, chloroplastic (101 aa).

A run of 3 helical transmembrane segments spans residues 2-22 (MLEHIPVLSAYLFSIDIYGLI), 32-52 (MCLELILNAVNINFVTFSDFF), and 61-81 (IFSIFVIAIAAAEAAIGSAIV).

Belongs to the complex I subunit 4L family. NDH is composed of at least 16 different subunits, 5 of which are encoded in the nucleus.

It is found in the plastid. The protein resides in the chloroplast thylakoid membrane. It catalyses the reaction a plastoquinone + NADH + (n+1) H(+)(in) = a plastoquinol + NAD(+) + n H(+)(out). It carries out the reaction a plastoquinone + NADPH + (n+1) H(+)(in) = a plastoquinol + NADP(+) + n H(+)(out). In terms of biological role, NDH shuttles electrons from NAD(P)H:plastoquinone, via FMN and iron-sulfur (Fe-S) centers, to quinones in the photosynthetic chain and possibly in a chloroplast respiratory chain. The immediate electron acceptor for the enzyme in this species is believed to be plastoquinone. Couples the redox reaction to proton translocation, and thus conserves the redox energy in a proton gradient. The polypeptide is NAD(P)H-quinone oxidoreductase subunit 4L, chloroplastic (Gossypium barbadense (Sea Island cotton)).